Consider the following 109-residue polypeptide: Juvenile hormone esterase, isoform A (109 aa).

The protein belongs to the type-B carboxylesterase/lipase family. As to expression, fat body, the site of their biosynthesis, and the hemolymph where it is secreted.

It carries out the reaction juvenile hormone I + H2O = juvenile hormone I carboxylate + methanol + H(+). It catalyses the reaction juvenile hormone III + H2O = juvenile hormone III carboxylate + methanol + H(+). Functionally, JH esterase plays a crucial role in the decrease of JH activity in lepidopteran insects, by hydrolyzing the methyl ester of JH. It is also involved in the transport of JH. This is Juvenile hormone esterase, isoform A from Trichoplusia ni (Cabbage looper).